The chain runs to 346 residues: Aspartate-semialdehyde dehydrogenase (346 aa).

NADP(+) is bound by residues 10-13 (TGQG) and 38-39 (RS). Arginine 98 contributes to the phosphate binding site. The active-site Acyl-thioester intermediate is the cysteine 131. Substrate is bound at residue glutamine 158. 161–162 (SG) is an NADP(+) binding site. Lysine 228 is a phosphate binding site. Residue arginine 250 participates in substrate binding. Histidine 257 acts as the Proton acceptor in catalysis. Asparagine 326 provides a ligand contact to NADP(+).

The protein belongs to the aspartate-semialdehyde dehydrogenase family. Homodimer.

The enzyme catalyses L-aspartate 4-semialdehyde + phosphate + NADP(+) = 4-phospho-L-aspartate + NADPH + H(+). It participates in amino-acid biosynthesis; L-lysine biosynthesis via DAP pathway; (S)-tetrahydrodipicolinate from L-aspartate: step 2/4. The protein operates within amino-acid biosynthesis; L-methionine biosynthesis via de novo pathway; L-homoserine from L-aspartate: step 2/3. Its pathway is amino-acid biosynthesis; L-threonine biosynthesis; L-threonine from L-aspartate: step 2/5. In terms of biological role, catalyzes the NADPH-dependent formation of L-aspartate-semialdehyde (L-ASA) by the reductive dephosphorylation of L-aspartyl-4-phosphate. This Mycolicibacterium smegmatis (Mycobacterium smegmatis) protein is Aspartate-semialdehyde dehydrogenase.